The chain runs to 970 residues: MSIYRRYISKSVIFFSVFFVIFFLFIESSVGFKYIFNFTNRIFIGLKAEEISGNWRDFTLKNIKYDVFGISITANSLHIVLDTRSLFKMSTIFKKIETKNVILSLKKNTASNFSQNSLPSKISKNIFFIKYPIILKKIHADKILFTSPKVRVSFLDVLSGIKLVRNNIIFSPTYINTIHVSSAKFNFEKKNILNKSTIIKNFNKIKKIYSFSYFSSNQTKKNFPLNIYLKSLKCNKTQFIDYEYKNLLQVELQANIENNILQINKMKVDSSFLKMNSYGKVIFNNDYSISCVMNSKTVIPSLYNKSINFQLKANFNVDHQLIFKLISKDLYNMKINGLVFLNFSDYPFFIKLQSRNLSCVIKKNYIFKLKSFDGVLKGYINNYFFSLKNIFTLQDLPPIFIDIQGRGDLNNIFLKKINFFPIKQKKFYKKVIHPEDYIKYNQYILKLIGQINITGKSDRHTHYVHIPKIDLYANIMKKKLSILGALYYKNFNFIETPGINLLLGKNKLYLRGSLGKKYNIYSSIYANNLDYFFPKLQGRMQAKVNFLGNNKFPIISSKILARDLNWNNIYFKNIKVLTGININNTFSGKMLIYANKIHFYKFYINTLHIQTYSNNHKQNFSFLLKSNRLHINLIINGAFNNKTGHWHGFFKKINIRTFWGQVTAKKNNFIHYYDSHNSITNFYQKSIKKRNCFSSFLYNVKMSFFNLFNRSFISFESKLSINAKLKLILGKMISDGAIFLKGNNTKLEKKINKKIFIQNIDFFKISMNLIKNDFKSKWIIKKNKKLSNNKNIFGYLNIIDIYNKKNIKGEFIFYKFPFSFINFFTTNFKEVSGKFQSKIKLFGTLYQPKVLADVHFKNIFIRSNNILKYITLFFPYFLGKVDNIKINQEIMMNKGNILFTLKPFFKNNSADIEWNIAFNSKKISVLIFPKIKVKFSSKLNLHYLFSKYDLIGYIKFSLFYFQINEKNFIF.

Residues 12–32 form a helical membrane-spanning segment; sequence VIFFSVFFVIFFLFIESSVGF.

It to E.coli YtfN.

It is found in the membrane. This is an uncharacterized protein from Buchnera aphidicola subsp. Acyrthosiphon pisum (strain APS) (Acyrthosiphon pisum symbiotic bacterium).